The following is a 305-amino-acid chain: Endonuclease III-like protein 1 (305 aa).

A mitochondrion-targeting transit peptide spans 1–28; it reads MNAAGVRMVVTRARSRGTGASLRRRGEK. Residues 1–83 form a disordered region; that stretch reads MNAAGVRMVV…HLQAPSWQPQ (83 aa). Ser-64 is modified (phosphoserine). The region spanning 192–216 is the HhH domain; that stretch reads RYDGDIPASVAELVALPGVGPKMAH. Lys-213 serves as the catalytic Nucleophile; for N-glycosylase activity. 4 residues coordinate [4Fe-4S] cluster: Cys-283, Cys-290, Cys-293, and Cys-299.

This sequence belongs to the Nth/MutY family. Interacts with YBX1. Interacts with ERCC5/XPG; the interaction stimulates NTHL1 activity and NTHL1 binding to its DNA substrate. It depends on [4Fe-4S] cluster as a cofactor.

The protein localises to the nucleus. It localises to the mitochondrion. The catalysed reaction is 2'-deoxyribonucleotide-(2'-deoxyribose 5'-phosphate)-2'-deoxyribonucleotide-DNA = a 3'-end 2'-deoxyribonucleotide-(2,3-dehydro-2,3-deoxyribose 5'-phosphate)-DNA + a 5'-end 5'-phospho-2'-deoxyribonucleoside-DNA + H(+). In terms of biological role, bifunctional DNA N-glycosylase with associated apurinic/apyrimidinic (AP) lyase function that catalyzes the first step in base excision repair (BER), the primary repair pathway for the repair of oxidative DNA damage. The DNA N-glycosylase activity releases the damaged DNA base from DNA by cleaving the N-glycosidic bond, leaving an AP site. The AP lyase activity cleaves the phosphodiester bond 3' to the AP site by a beta-elimination. Primarily recognizes and repairs oxidative base damage of pyrimidines. In Bos taurus (Bovine), this protein is Endonuclease III-like protein 1.